Here is a 249-residue protein sequence, read N- to C-terminus: NAD kinase (249 aa).

D45 acts as the Proton acceptor in catalysis. Residues 45 to 46 (DG), R50, 110 to 111 (NE), D138, and 149 to 154 (SGWGMS) contribute to the NAD(+) site.

Belongs to the NAD kinase family. It depends on a divalent metal cation as a cofactor.

It localises to the cytoplasm. It catalyses the reaction NAD(+) + ATP = ADP + NADP(+) + H(+). In terms of biological role, involved in the regulation of the intracellular balance of NAD and NADP, and is a key enzyme in the biosynthesis of NADP. Catalyzes specifically the phosphorylation on 2'-hydroxyl of the adenosine moiety of NAD to yield NADP. This Saccharolobus islandicus (strain Y.N.15.51 / Yellowstone #2) (Sulfolobus islandicus) protein is NAD kinase.